Consider the following 875-residue polypeptide: Valine--tRNA ligase (875 aa).

Positions 45–55 (PNVTGVLHMGH) match the 'HIGH' region motif. A 'KMSKS' region motif is present at residues 524–528 (KMSKS). Lysine 527 contacts ATP. The stretch at 803-837 (VKSLIDKTKELIRLEKQLEKYKMLNISVSKKLENE) forms a coiled coil.

It belongs to the class-I aminoacyl-tRNA synthetase family. ValS type 1 subfamily. Monomer.

Its subcellular location is the cytoplasm. It catalyses the reaction tRNA(Val) + L-valine + ATP = L-valyl-tRNA(Val) + AMP + diphosphate. In terms of biological role, catalyzes the attachment of valine to tRNA(Val). As ValRS can inadvertently accommodate and process structurally similar amino acids such as threonine, to avoid such errors, it has a 'posttransfer' editing activity that hydrolyzes mischarged Thr-tRNA(Val) in a tRNA-dependent manner. The sequence is that of Valine--tRNA ligase from Borreliella burgdorferi (strain ATCC 35210 / DSM 4680 / CIP 102532 / B31) (Borrelia burgdorferi).